Here is a 536-residue protein sequence, read N- to C-terminus: GATA zinc finger domain-containing protein 9 (536 aa).

Polar residues-rich tracts occupy residues M1–S20 and C36–A55. Disordered regions lie at residues M1 to S77, S183 to S211, R237 to S258, Q273 to Q342, and A370 to S423. Residues T56–N72 show a composition bias toward low complexity. A compositionally biased stretch (acidic residues) spans S188–G206. Basic residues predominate over residues R237–Y247. Residues Q273 to N283 show a composition bias toward polar residues. Low complexity-rich tracts occupy residues S318–N335 and P379–N399. The GATA-type zinc finger occupies C479 to C504.

The sequence is that of GATA zinc finger domain-containing protein 9 (gtaI) from Dictyostelium discoideum (Social amoeba).